The primary structure comprises 708 residues: ATP-dependent DNA helicase Hel308 (708 aa).

ATP is bound by residues Q28 and 46–53; that span reads TATASGKS. The 166-residue stretch at 33 to 198 folds into the Helicase ATP-binding domain; sequence RAGIFDGRSV…WLGARLVESS (166 aa). The short motif at 143-146 is the DEAH box element; sequence DEIH. A Helicase C-terminal domain is found at 231 to 429; it reads EVALAVDAVA…EPNLRAHVLG (199 aa).

The protein belongs to the helicase family. Hel308 subfamily. In terms of assembly, monomer.

The catalysed reaction is Couples ATP hydrolysis with the unwinding of duplex DNA by translocating in the 3'-5' direction.. It catalyses the reaction ATP + H2O = ADP + phosphate + H(+). Functionally, DNA-dependent ATPase and 3'-5' DNA helicase that may be involved in repair of stalled replication forks. The polypeptide is ATP-dependent DNA helicase Hel308 (Pyrobaculum calidifontis (strain DSM 21063 / JCM 11548 / VA1)).